Here is a 266-residue protein sequence, read N- to C-terminus: Eukaryotic translation initiation factor 3 subunit J (266 aa).

Disordered stretches follow at residues 1–111 (MAPS…EKDA) and 217–266 (NEKM…DDFM). Acidic residues predominate over residues 26-44 (DEEEEDVLDSWDAAEDSEV). Residues 40–82 (EDSEVEREKAAKAAEAKAKAEAEAAANKKSKAQRIQEKKAQRK) adopt a coiled-coil conformation. 2 stretches are compositionally biased toward basic and acidic residues: residues 45 to 61 (EREKAAKAAEAKAKAEA) and 73 to 85 (RIQEKKAQRKADA). The segment covering 86 to 97 (DAEDSDDSDEDE) has biased composition (acidic residues). 2 stretches are compositionally biased toward basic and acidic residues: residues 98–111 (AERRARLRKTEKDA) and 218–230 (EKMKEERAADKGN). A compositionally biased stretch (acidic residues) spans 254–266 (SYDDDGLDDDDFM).

The protein belongs to the eIF-3 subunit J family. Component of the eukaryotic translation initiation factor 3 (eIF-3) complex.

The protein localises to the cytoplasm. Component of the eukaryotic translation initiation factor 3 (eIF-3) complex, which is involved in protein synthesis of a specialized repertoire of mRNAs and, together with other initiation factors, stimulates binding of mRNA and methionyl-tRNAi to the 40S ribosome. The eIF-3 complex specifically targets and initiates translation of a subset of mRNAs involved in cell proliferation. The sequence is that of Eukaryotic translation initiation factor 3 subunit J (hcr1) from Aspergillus niger (strain ATCC MYA-4892 / CBS 513.88 / FGSC A1513).